Reading from the N-terminus, the 153-residue chain is 6,7-dimethyl-8-ribityllumazine synthase (153 aa).

5-amino-6-(D-ribitylamino)uracil contacts are provided by residues Phe-23, 57-59, and 81-83; these read AYE and AVI. 86-87 lines the (2S)-2-hydroxy-3-oxobutyl phosphate pocket; sequence AT. The active-site Proton donor is His-89. Position 113 (Phe-113) interacts with 5-amino-6-(D-ribitylamino)uracil. Arg-127 serves as a coordination point for (2S)-2-hydroxy-3-oxobutyl phosphate.

The protein belongs to the DMRL synthase family.

The enzyme catalyses (2S)-2-hydroxy-3-oxobutyl phosphate + 5-amino-6-(D-ribitylamino)uracil = 6,7-dimethyl-8-(1-D-ribityl)lumazine + phosphate + 2 H2O + H(+). It participates in cofactor biosynthesis; riboflavin biosynthesis; riboflavin from 2-hydroxy-3-oxobutyl phosphate and 5-amino-6-(D-ribitylamino)uracil: step 1/2. In terms of biological role, catalyzes the formation of 6,7-dimethyl-8-ribityllumazine by condensation of 5-amino-6-(D-ribitylamino)uracil with 3,4-dihydroxy-2-butanone 4-phosphate. This is the penultimate step in the biosynthesis of riboflavin. In Leptospira borgpetersenii serovar Hardjo-bovis (strain JB197), this protein is 6,7-dimethyl-8-ribityllumazine synthase.